The following is a 282-amino-acid chain: Armadillo repeat-containing protein 1 (282 aa).

Met1 is subject to N-acetylmethionine. Residues 39–81 (GCLPGLILSMDHPNPPVVHSALLALRYLAECRANREKMKGELG) form an ARM repeat. At Thr137 the chain carries Phosphothreonine. A phosphoserine mark is found at Ser189, Ser246, Ser260, and Ser267. Positions 239–261 (DYLPEDESPTKEQDKAVSRVGSH) are disordered. Residues 246 to 255 (SPTKEQDKAV) show a composition bias toward basic and acidic residues.

In terms of assembly, interacts with mitochondrial contact site and cristae organizing system (MICOS) complex components IMMT/MIC60 and MICOS10/MIC10. Interacts with mitochondrial outer membrane sorting assembly machinery (SAM) complex components SAMM50 and MTX1.

The protein localises to the cytoplasm. Its subcellular location is the mitochondrion. The protein resides in the mitochondrion outer membrane. Its function is as follows. In association with mitochondrial contact site and cristae organizing system (MICOS) complex components and mitochondrial outer membrane sorting assembly machinery (SAM) complex components may regulate mitochondrial dynamics playing a role in determining mitochondrial length, distribution and motility. This chain is Armadillo repeat-containing protein 1 (ARMC1), found in Pongo abelii (Sumatran orangutan).